The chain runs to 251 residues: MIIPALDIINGDAVRLYQGKYQSQSHYGNPYSILSTYVQQGATMIHLVDLDGARNPKNRQLSLIKELTHTAITSHLKIQIGGGIRHATDIKTLLKFGVNRVILGSIAITHPKKVKQWFTYFNPSSLVLALDIYIDSKNNRKVVIHGWQKETNIQLEEVIENYNSVGLKHVLCTDISKDGTLLGSNINLYQSICYKWPKISFQASGGVAKLTEILQLRSSGVNSIIIGRSFLEKKFTLTEAISCWQNASSRV.

The Proton acceptor role is filled by aspartate 7. The active-site Proton donor is the aspartate 131.

It belongs to the HisA/HisF family.

Its subcellular location is the cytoplasm. The enzyme catalyses 1-(5-phospho-beta-D-ribosyl)-5-[(5-phospho-beta-D-ribosylamino)methylideneamino]imidazole-4-carboxamide = 5-[(5-phospho-1-deoxy-D-ribulos-1-ylimino)methylamino]-1-(5-phospho-beta-D-ribosyl)imidazole-4-carboxamide. It participates in amino-acid biosynthesis; L-histidine biosynthesis; L-histidine from 5-phospho-alpha-D-ribose 1-diphosphate: step 4/9. This is 1-(5-phosphoribosyl)-5-[(5-phosphoribosylamino)methylideneamino] imidazole-4-carboxamide isomerase from Blochmanniella floridana.